The sequence spans 358 residues: UDP-N-acetylglucosamine--N-acetylmuramyl-(pentapeptide) pyrophosphoryl-undecaprenol N-acetylglucosamine transferase (358 aa).

Residues 11-13 (TGG), Arg-163, Ser-191, Ile-245, and Gln-290 each bind UDP-N-acetyl-alpha-D-glucosamine.

The protein belongs to the glycosyltransferase 28 family. MurG subfamily.

The protein resides in the cell inner membrane. The enzyme catalyses di-trans,octa-cis-undecaprenyl diphospho-N-acetyl-alpha-D-muramoyl-L-alanyl-D-glutamyl-meso-2,6-diaminopimeloyl-D-alanyl-D-alanine + UDP-N-acetyl-alpha-D-glucosamine = di-trans,octa-cis-undecaprenyl diphospho-[N-acetyl-alpha-D-glucosaminyl-(1-&gt;4)]-N-acetyl-alpha-D-muramoyl-L-alanyl-D-glutamyl-meso-2,6-diaminopimeloyl-D-alanyl-D-alanine + UDP + H(+). The protein operates within cell wall biogenesis; peptidoglycan biosynthesis. In terms of biological role, cell wall formation. Catalyzes the transfer of a GlcNAc subunit on undecaprenyl-pyrophosphoryl-MurNAc-pentapeptide (lipid intermediate I) to form undecaprenyl-pyrophosphoryl-MurNAc-(pentapeptide)GlcNAc (lipid intermediate II). In Janthinobacterium sp. (strain Marseille) (Minibacterium massiliensis), this protein is UDP-N-acetylglucosamine--N-acetylmuramyl-(pentapeptide) pyrophosphoryl-undecaprenol N-acetylglucosamine transferase.